A 285-amino-acid polypeptide reads, in one-letter code: OPEP-3 protein (285 aa).

This is OPEP-3 protein (OPEP-3) from Orgyia pseudotsugata multicapsid polyhedrosis virus (OpMNPV).